The sequence spans 128 residues: Insulin-like 3 (128 aa).

The N-terminal stretch at 1–15 (MHALLLLLLLALGSA) is a signal peptide. 3 disulfide bridges follow: cysteine 29/cysteine 113, cysteine 41/cysteine 126, and cysteine 112/cysteine 117. The segment covering 81–94 (ALDPDPALDPQLPH) has biased composition (low complexity). The disordered stretch occupies residues 81-101 (ALDPDPALDPQLPHQASQRQR).

The protein belongs to the insulin family. As to quaternary structure, heterodimer of a B chain and an A chain linked by two disulfide bonds. In terms of tissue distribution, expressed in Leydig cells of the testis, and weakly in the theca interna cells of antral follicles and the corpus luteum of the ovary.

Its subcellular location is the secreted. Its function is as follows. Seems to play a role in testicular function. May be a trophic hormone with a role in testicular descent in fetal life. Is a ligand for LGR8 receptor. The polypeptide is Insulin-like 3 (Insl3) (Rattus norvegicus (Rat)).